The sequence spans 596 residues: Endoribonuclease ZC3H12A (596 aa).

2 disordered regions span residues 1–48 (MSDP…TSEL) and 97–134 (QALTAPSPQPPLVPRGGSTPKPSTLEPSLPEEDREGSD). Residues 10 to 19 (VQESNPTMSL) are compositionally biased toward polar residues. Residues 42–87 (EAPTSELQMKVDFFRKLGYSSSEIHSVLQKLGVQADTNTVLGELVK) are ubiquitin association domain. The interval 81–150 (VLGELVKHGS…DGSNVAMSHG (70 aa)) is necessary for interaction with TANK. The segment at 112–281 (GGSTPKPSTL…DKFMPPDDPL (170 aa)) is RNase. Residues 135–290 (LRPVVIDGSN…LGRHGPSLDN (156 aa)) form the RNase NYN domain. Residues 214–220 (RRVGGKR) are RNA binding. Residue aspartate 226 participates in Mg(2+) binding. Disordered regions lie at residues 278–306 (DDPLGRHGPSLDNFLRKKPLPSEHRKQPC) and 340–417 (NALL…PTEW). The C3H1-type zinc finger occupies 301 to 324 (HRKQPCPYGKKCTYGIKCRFFHPE). A necessary for interaction with ZC3H12D region spans residues 301–454 (HRKQPCPYGK…SELWGVRGGS (154 aa)). At serine 344 the chain carries Phosphoserine. The segment covering 356-368 (QRPSPASQSSSVS) has biased composition (low complexity). Phosphoserine occurs at positions 435 and 439. The segment at 511–543 (YWSEPYPLPPPTPVLQEPQRPSPGAGGGPWGRV) is disordered. Residues 524-533 (VLQEPQRPSP) show a composition bias toward low complexity.

This sequence belongs to the ZC3H12 family. In terms of assembly, oligomer. Found in a deubiquitination complex with TANK, USP10 and ZC3H12A; this complex inhibits genotoxic stress- or interleukin-1-beta-mediated NF-kappaB activation by promoting IKBKG or TRAF6 deubiquitination. Interacts with IKBKG; this interaction increases in response to DNA damage. Interacts with TANK; this interaction increases in response to DNA damage and serves as a bridge to anchor both TANK and USP10 into a deubiquitinating complex. Interacts with TRAF6; this interaction increases in response to DNA damage and is stimulated by TANK. Interacts with USP10; this interaction increases in response to DNA damage and serves as a bridge to anchor both TANK and USP10 into a deubiquitinating complex. Interacts with ZC3H12D. Interacts with TNRC6A. Interacts with IKBKB/IKKB. Interacts with IKBKB/IKKB. Interacts with IKBKB/IKKB. Interacts with BTRC; the interaction occurs when ZC3H12A is phosphorylated in a IKBKB/IKKB-dependent manner. Interacts with IRAK1; this interaction increases the interaction between ZC3H12A and IKBKB/IKKB. Interacts with UPF1; this interaction occurs in a mRNA translationally active- and termination-dependent manner and is essential for ZC3H12A-mediated degradation of target mRNAs. Associates with ribosomes. Interacts with ubiquitin. It depends on Mg(2+) as a cofactor. Proteolytically cleaved between Arg-111 and Arg-214 by MALT1 in activated T-cells; cleavage at Arg-111 is critical for promoting ZC3H12A degradation in response to T-cell receptor (TCR) stimulation, and hence is necessary for prolonging the stability of a set of mRNAs controlling T-cell activation and Th17 cell differentiation. Post-translationally, phosphorylated by IRAK1; phosphorylation is necessary for subsequent phosphorylation by the I-kappa-B-kinase (IKK) complex. Phosphorylated by I-kappa-B-kinases (IKKs) at Ser-435 and Ser-439 upon lipopolysaccharide (LPS) or IL1B stimulation in macrophages through the MyD88-dependent signaling pathway; these phosphorylations promote rapid ubiquitin proteasome-mediated degradation of ZC3H12A in macrophages and hence allows its target mRNAs, such as IL6, to escape from degradation and accumulate during the inflammatory response. In terms of processing, ubiquitinated; ubiquitination is induced in response to interleukin IL1 receptor stimuli in a IKBKB/IKKB and IRAK1-dependent manner, leading to proteasome-mediated degradation. In terms of tissue distribution, expressed in CD4(+) helper T-cells (at protein level). Highly expressed in macrophages. Expressed in lung, lymph nodes, spleen and thymus. Expressed weakly in heart. Expressed weakly in cardiomyocytes (at protein level). Expressed in spleen, lung, intestine, brown adipose tissue and thymus. Weakly expressed in the heart. Weakly expressed in cardiomyocytes.

The protein resides in the nucleus. The protein localises to the cytoplasm. It is found in the rough endoplasmic reticulum membrane. Its subcellular location is the cytoplasmic granule. It localises to the P-body. Its function is as follows. Endoribonuclease involved in various biological functions such as cellular inflammatory response and immune homeostasis, glial differentiation of neuroprogenitor cells, cell death of cardiomyocytes, adipogenesis and angiogenesis. Functions as an endoribonuclease involved in mRNA decay. Modulates the inflammatory response by promoting the degradation of a set of translationally active cytokine-induced inflammation-related mRNAs, such as IL6 and IL12B, during the early phase of inflammation. Prevents aberrant T-cell-mediated immune reaction by degradation of multiple mRNAs controlling T-cell activation, such as those encoding cytokines (IL6 and IL2), cell surface receptors (ICOS, TNFRSF4 and TNFR2) and transcription factor (REL). Inhibits cooperatively with ZC3H12A the differentiation of helper T cells Th17 in lungs. They repress target mRNA encoding the Th17 cell-promoting factors IL6, ICOS, REL, IRF4, NFKBID and NFKBIZ. The cooperation requires RNA-binding by RC3H1 and the nuclease activity of ZC3H12A. Together with RC3H1, destabilizes TNFRSF4/OX40 mRNA by binding to the conserved stem loop structure in its 3'UTR. Self regulates by destabilizing its own mRNA. Cleaves mRNA harboring a stem-loop (SL), often located in their 3'-UTRs, during the early phase of inflammation in a helicase UPF1-dependent manner. Plays a role in the inhibition of microRNAs (miRNAs) biogenesis. Cleaves the terminal loop of a set of precursor miRNAs (pre-miRNAs) important for the regulation of the inflammatory response leading to their degradation, and thus preventing the biosynthesis of mature miRNAs. Also plays a role in promoting angiogenesis in response to inflammatory cytokines by inhibiting the production of antiangiogenic microRNAs via its anti-dicer RNase activity. Affects the overall ubiquitination of cellular proteins. Positively regulates deubiquitinase activity promoting the cleavage at 'Lys-48'- and 'Lys-63'-linked polyubiquitin chains on TNF receptor-associated factors (TRAFs), preventing JNK and NF-kappa-B signaling pathway activation, and hence negatively regulating macrophage-mediated inflammatory response and immune homeostasis. Induces also deubiquitination of the transcription factor HIF1A, probably leading to its stabilization and nuclear import, thereby positively regulating the expression of proangiogenic HIF1A-targeted genes. Involved in a TANK-dependent negative feedback response to attenuate NF-kappaB activation through the deubiquitination of IKBKG or TRAF6 in response to interleukin-1-beta (IL1B) stimulation or upon DNA damage. Prevents stress granules (SGs) formation and promotes macrophage apoptosis under stress conditions, including arsenite-induced oxidative stress, heat shock, and energy deprivation. Plays a role in the regulation of macrophage polarization; promotes IL4-induced polarization of macrophages M1 into anti-inflammatory M2 state. May also act as a transcription factor that regulates the expression of multiple genes involved in inflammatory response, angiogenesis, adipogenesis and apoptosis. Functions as a positive regulator of glial differentiation of neuroprogenitor cells through an amyloid precursor protein (APP)-dependent signaling pathway. Attenuates septic myocardial contractile dysfunction in response to lipopolysaccharide (LPS) by reducing I-kappa-B-kinase (IKK)-mediated NF-kappa-B activation, and hence myocardial pro-inflammatory cytokine production. In Mus musculus (Mouse), this protein is Endoribonuclease ZC3H12A.